We begin with the raw amino-acid sequence, 428 residues long: UPF0597 protein Dde_0807 (428 aa).

The protein belongs to the UPF0597 family.

This is UPF0597 protein Dde_0807 from Oleidesulfovibrio alaskensis (strain ATCC BAA-1058 / DSM 17464 / G20) (Desulfovibrio alaskensis).